We begin with the raw amino-acid sequence, 239 residues long: Octanoyltransferase (239 aa).

Residues 48-236 (EGGDELVWLV…AFETVFGETV (189 aa)) enclose the BPL/LPL catalytic domain. Substrate contacts are provided by residues 87 to 94 (RGGEYTYH), 167 to 169 (ALG), and 180 to 182 (GLS). The Acyl-thioester intermediate role is filled by Cys-198.

It belongs to the LipB family.

Its subcellular location is the cytoplasm. The catalysed reaction is octanoyl-[ACP] + L-lysyl-[protein] = N(6)-octanoyl-L-lysyl-[protein] + holo-[ACP] + H(+). Its pathway is protein modification; protein lipoylation via endogenous pathway; protein N(6)-(lipoyl)lysine from octanoyl-[acyl-carrier-protein]: step 1/2. Its function is as follows. Catalyzes the transfer of endogenously produced octanoic acid from octanoyl-acyl-carrier-protein onto the lipoyl domains of lipoate-dependent enzymes. Lipoyl-ACP can also act as a substrate although octanoyl-ACP is likely to be the physiological substrate. This Rhizobium etli (strain CIAT 652) protein is Octanoyltransferase.